Reading from the N-terminus, the 638-residue chain is Lactose permease (638 aa).

The tract at residues 1–470 (MHNHKVSGKQ…AQVIEELKSK (470 aa)) is permease. 12 helical membrane passes run 27–47 (FYGV…FSGL), 56–76 (IGLI…IDPI), 94–114 (WILI…TGIF), 121–141 (WILF…FYSL), 166–186 (LGAF…VPLV), 204–224 (WFAF…IVCF), 261–281 (LAYL…FYMY), 291–311 (FWVV…SFPV), 320–340 (WLFI…IFGH), 343–363 (VFLM…LVTV), 395–415 (FAGA…GMTG), and 429–449 (TFNM…IVVF). The PTS EIIA type-1 domain maps to 503 to 610 (SSVVDEDGKP…KDTIVIFYTQ (108 aa)). Phosphohistidine; by HPr is present on H558.

The protein in the N-terminal section; belongs to the sodium:galactoside symporter (TC 2.A.2) family.

It localises to the cell membrane. Its function is as follows. Responsible for transport of beta-galactosides into the cell, with the concomitant uptake of protons (symport system), and also for transport of homologous and heterologous exchange of beta-galactosides. The protein is Lactose permease (lacS) of Lactobacillus helveticus (Lactobacillus suntoryeus).